Consider the following 493-residue polypeptide: Cytochrome P450 710A4 (493 aa).

The helical transmembrane segment at 5-25 threads the bilayer; the sequence is VSLFASLTPYLVSALLLFLLL. Cys-435 contributes to the heme binding site.

The protein belongs to the cytochrome P450 family. Requires heme as cofactor. Very weak expression in roots and root hairs. Not detected in the root tips.

The protein resides in the membrane. The catalysed reaction is 5-dehydroepisterol + NADPH + O2 + H(+) = ergosta-5,7,22,24(28)-tetraen-3beta-ol + NADP(+) + 2 H2O. It functions in the pathway steroid biosynthesis; sterol biosynthesis. Functionally, required to form the C-22 double bond in the sterol side chain. Possesses C-22 desaturase activity toward beta-sitosterol and produces stigmasterol. This is Cytochrome P450 710A4 from Arabidopsis thaliana (Mouse-ear cress).